The sequence spans 348 residues: 3-isopropylmalate dehydrogenase (348 aa).

76-87 (GPKWTDPNNRPE) lines the NAD(+) pocket. Substrate contacts are provided by R94, R104, R132, and D217. Mg(2+) contacts are provided by D217, D241, and D245. An NAD(+)-binding site is contributed by 275–287 (GSAPDIAGKNVAN).

This sequence belongs to the isocitrate and isopropylmalate dehydrogenases family. LeuB type 1 subfamily. As to quaternary structure, homodimer. Mg(2+) is required as a cofactor. The cofactor is Mn(2+).

It is found in the cytoplasm. It carries out the reaction (2R,3S)-3-isopropylmalate + NAD(+) = 4-methyl-2-oxopentanoate + CO2 + NADH. It participates in amino-acid biosynthesis; L-leucine biosynthesis; L-leucine from 3-methyl-2-oxobutanoate: step 3/4. Catalyzes the oxidation of 3-carboxy-2-hydroxy-4-methylpentanoate (3-isopropylmalate) to 3-carboxy-4-methyl-2-oxopentanoate. The product decarboxylates to 4-methyl-2 oxopentanoate. The sequence is that of 3-isopropylmalate dehydrogenase from Staphylococcus aureus (strain MW2).